The primary structure comprises 367 residues: UDP-N-acetylglucosamine--N-acetylmuramyl-(pentapeptide) pyrophosphoryl-undecaprenol N-acetylglucosamine transferase (367 aa).

Residues 15–17, Asn-127, Arg-163, Ser-191, Ile-249, and Gln-294 contribute to the UDP-N-acetyl-alpha-D-glucosamine site; that span reads TGG.

The protein belongs to the glycosyltransferase 28 family. MurG subfamily.

Its subcellular location is the cell inner membrane. It carries out the reaction di-trans,octa-cis-undecaprenyl diphospho-N-acetyl-alpha-D-muramoyl-L-alanyl-D-glutamyl-meso-2,6-diaminopimeloyl-D-alanyl-D-alanine + UDP-N-acetyl-alpha-D-glucosamine = di-trans,octa-cis-undecaprenyl diphospho-[N-acetyl-alpha-D-glucosaminyl-(1-&gt;4)]-N-acetyl-alpha-D-muramoyl-L-alanyl-D-glutamyl-meso-2,6-diaminopimeloyl-D-alanyl-D-alanine + UDP + H(+). Its pathway is cell wall biogenesis; peptidoglycan biosynthesis. Cell wall formation. Catalyzes the transfer of a GlcNAc subunit on undecaprenyl-pyrophosphoryl-MurNAc-pentapeptide (lipid intermediate I) to form undecaprenyl-pyrophosphoryl-MurNAc-(pentapeptide)GlcNAc (lipid intermediate II). The sequence is that of UDP-N-acetylglucosamine--N-acetylmuramyl-(pentapeptide) pyrophosphoryl-undecaprenol N-acetylglucosamine transferase from Burkholderia thailandensis (strain ATCC 700388 / DSM 13276 / CCUG 48851 / CIP 106301 / E264).